Reading from the N-terminus, the 370-residue chain is Tomoregulin-1 (370 aa).

An N-terminal signal peptide occupies residues 1-36 (MDGLHPASWMLLLGSLAFWSASSLLLFSLALPGARA). The Extracellular segment spans residues 37–320 (SNQLLSECHN…VPSRQKLTHV (284 aa)). N53 carries N-linked (GlcNAc...) asparagine glycosylation. Kazal-like domains follow at residues 88–135 (ICQF…PCFS) and 179–227 (VCNI…SCIE). 9 disulfide bridges follow: C89–C119, C93–C112, C101–C133, C180–C211, C184–C204, C193–C225, C265–C278, C273–C289, and C291–C300. The EGF-like domain maps to 261–301 (NYIPCSENYNGYCVHGKCELSYSSQKASCRCDSGYTGQYCD). The chain crosses the membrane as a helical span at residues 321–341 (LIAAIIGAVQIAIIVAIVMCI). Residues 342–370 (TRKCPKNNRGRRQKQNLGHFSSDTSSRMV) are Cytoplasmic-facing. The disordered stretch occupies residues 349-370 (NRGRRQKQNLGHFSSDTSSRMV). Residues 356–370 (QNLGHFSSDTSSRMV) are compositionally biased toward polar residues.

This sequence belongs to the tomoregulin family. In terms of assembly, interacts with cripto. As to expression, expressed at highest levels in brain, and at lower levels in neuroendocrine tissues. Present in neurons from the diencephalon (at protein level).

The protein localises to the cell membrane. Its function is as follows. Inhibits nodal/nr-1 and bmp signaling during neural patterning through interaction with cripto. This Xenopus laevis (African clawed frog) protein is Tomoregulin-1 (tmeff1).